The chain runs to 273 residues: MARCSNNLVGILNFLVFLLSIPILAGGIWLSQKGSTECERFLDKPVIALGVFLMVVAIAGLIGSCCRVTWLLWVYLFVMFLLILLVFCITVFAFVVTNKGAGEAIEGKGYKEYKLGDYSTWLQKRVENGKNWNKIRSCLVESKVCSKLEAKFVNVPVNSFYKEHLTALQSGCCKPSDECGFEYVNPTTWTKNTTGTHTNPDCQTWDNAKEKLCFDCQSCKAGLLDNVKSAWKKVAIVNIVFLVFLIIVYSVGCCAFRNNKRDDSYSRTYGYKP.

At 1–7 (MARCSNN) the chain is on the cytoplasmic side. Residues 8–28 (LVGILNFLVFLLSIPILAGGI) traverse the membrane as a helical segment. The Extracellular portion of the chain corresponds to 29-45 (WLSQKGSTECERFLDKP). Residues 46–66 (VIALGVFLMVVAIAGLIGSCC) form a helical membrane-spanning segment. Topologically, residues 67-75 (RVTWLLWVY) are cytoplasmic. The chain crosses the membrane as a helical span at residues 76–96 (LFVMFLLILLVFCITVFAFVV). Topologically, residues 97–235 (TNKGAGEAIE…NVKSAWKKVA (139 aa)) are extracellular. The N-linked (GlcNAc...) asparagine glycan is linked to Asn192. Residues 236 to 256 (IVNIVFLVFLIIVYSVGCCAF) traverse the membrane as a helical segment. Residues 257–273 (RNNKRDDSYSRTYGYKP) lie on the Cytoplasmic side of the membrane.

Belongs to the tetraspanin (TM4SF) family.

It is found in the membrane. May be involved in the regulation of cell differentiation. The polypeptide is Tetraspanin-8 (TET8) (Arabidopsis thaliana (Mouse-ear cress)).